A 1104-amino-acid chain; its full sequence is Transposon Ty4-P Gag-Pol polyprotein (1104 aa).

The stretch at 48 to 112 forms a coiled coil; that stretch reads VKQYQRNLNR…VEKIQLLETN (65 aa). The tract at residues 381-501 is ty4 protease; sequence QQQLKSSAKE…KTKMVLSRKY (121 aa). Residue Asp-414 is the For protease activity; shared with dimeric partner of the active site. The segment at 539–599 is integrase-type zinc finger-like; sequence AIKPTSSPGF…EPNEFWCQTC (61 aa). The Integrase catalytic domain occupies 619-786; it reads TDHEPGSSWC…LPLKAISRQP (168 aa). Residues Asp-630 and Asp-695 each coordinate Mg(2+).

As to quaternary structure, the protease is a homodimer, whose active site consists of two apposed aspartic acid residues. Post-translationally, proteolytically processed into capsid protein (CA), Ty4 protease (PR), integrase (IN) and reverse transcriptase/ribonuclease H (RT) proteins. Initially, virus-like particles (VLPs) are composed of the structural unprocessed proteins Gag and Gag-Pol, and also contain the host initiator methionine tRNA (tRNA(i)-Met) which serves as a primer for minus-strand DNA synthesis, and a dimer of genomic Ty RNA. Processing of the polyproteins occurs within the particle and proceeds by an ordered pathway, called maturation. First, the protease (PR) is released by autocatalytic cleavage of the Gag-Pol polyprotein, and this cleavage is a prerequisite for subsequent processing at the remaining sites to release the mature structural and catalytic proteins. Maturation takes place prior to the RT reaction and is required to produce transposition-competent VLPs.

It is found in the cytoplasm. It localises to the nucleus. It catalyses the reaction DNA(n) + a 2'-deoxyribonucleoside 5'-triphosphate = DNA(n+1) + diphosphate. The enzyme catalyses Endonucleolytic cleavage to 5'-phosphomonoester.. Capsid protein (CA) is the structural component of the virus-like particle (VLP), forming the shell that encapsulates the retrotransposons dimeric RNA genome. Functionally, the aspartyl protease (PR) mediates the proteolytic cleavages of the Gag and Gag-Pol polyproteins after assembly of the VLP. In terms of biological role, reverse transcriptase/ribonuclease H (RT) is a multifunctional enzyme that catalyzes the conversion of the retro-elements RNA genome into dsDNA within the VLP. The enzyme displays a DNA polymerase activity that can copy either DNA or RNA templates, and a ribonuclease H (RNase H) activity that cleaves the RNA strand of RNA-DNA heteroduplexes during plus-strand synthesis and hydrolyzes RNA primers. The conversion leads to a linear dsDNA copy of the retrotransposon that includes long terminal repeats (LTRs) at both ends. Its function is as follows. Integrase (IN) targets the VLP to the nucleus, where a subparticle preintegration complex (PIC) containing at least integrase and the newly synthesized dsDNA copy of the retrotransposon must transit the nuclear membrane. Once in the nucleus, integrase performs the integration of the dsDNA into the host genome. The chain is Transposon Ty4-P Gag-Pol polyprotein (TY4B-P) from Saccharomyces cerevisiae (strain ATCC 204508 / S288c) (Baker's yeast).